The primary structure comprises 119 residues: NAD(P)H-quinone oxidoreductase subunit M (119 aa).

Belongs to the complex I NdhM subunit family. As to quaternary structure, NDH-1 can be composed of about 15 different subunits; different subcomplexes with different compositions have been identified which probably have different functions.

It localises to the cellular thylakoid membrane. The catalysed reaction is a plastoquinone + NADH + (n+1) H(+)(in) = a plastoquinol + NAD(+) + n H(+)(out). The enzyme catalyses a plastoquinone + NADPH + (n+1) H(+)(in) = a plastoquinol + NADP(+) + n H(+)(out). Its function is as follows. NDH-1 shuttles electrons from an unknown electron donor, via FMN and iron-sulfur (Fe-S) centers, to quinones in the respiratory and/or the photosynthetic chain. The immediate electron acceptor for the enzyme in this species is believed to be plastoquinone. Couples the redox reaction to proton translocation, and thus conserves the redox energy in a proton gradient. Cyanobacterial NDH-1 also plays a role in inorganic carbon-concentration. The sequence is that of NAD(P)H-quinone oxidoreductase subunit M from Crocosphaera subtropica (strain ATCC 51142 / BH68) (Cyanothece sp. (strain ATCC 51142)).